We begin with the raw amino-acid sequence, 382 residues long: MSTWLLPENIADVLPSEARKIEELRRRLLDRFRSYGYEMVMPPLLEYLESLLTSGGADLRLRTFKLVDQLSGRTLGLRADITPQVARIDAHLLNRQGVTRLCYAGHVMHTRPRGLHATREQIQIGAEIYGHAGLEADLEIQQLMLDALHLAGLSRIRLDLCHAGVLAALLARDAQAAERGESLYDALSGKDVPLLNELTDDLGADTRAALRALPHLYGDASVLDEARARLPVLPEITRALDDLAQLAAQAKGVEVAIDLADLRGYAYHSGAMFTAYIDGVPNAIARGGRYDHVGQAYGRARPATGFSLDLRELARISPIEARGTAILAPWAQDDALGAAVAALRDAGEVVIQALPGHDHVLDEFACDRSLVERNGAWVVEPR.

This sequence belongs to the class-II aminoacyl-tRNA synthetase family. HisZ subfamily. In terms of assembly, heteromultimer composed of HisG and HisZ subunits.

It is found in the cytoplasm. It functions in the pathway amino-acid biosynthesis; L-histidine biosynthesis; L-histidine from 5-phospho-alpha-D-ribose 1-diphosphate: step 1/9. In terms of biological role, required for the first step of histidine biosynthesis. May allow the feedback regulation of ATP phosphoribosyltransferase activity by histidine. In Burkholderia ambifaria (strain ATCC BAA-244 / DSM 16087 / CCUG 44356 / LMG 19182 / AMMD) (Burkholderia cepacia (strain AMMD)), this protein is ATP phosphoribosyltransferase regulatory subunit.